We begin with the raw amino-acid sequence, 534 residues long: uncharacterized protein (534 aa).

Helical transmembrane passes span 4-22 (ILVLLCVIALGLLVGRVSF), 24-46 (GISLGTSAILFVALLAGHYGWTI), 56-75 (ALFVYCVGISAGPTFFRGLA), 82-104 (AITGSVIVLTGVAVTWTSARLLG), and 134-156 (PAAVAVGFGVAYPIGIIAVVLFV). The disordered stretch occupies residues 167 to 187 (GDSDGTDSASETSGQSSAEIA). Residues 172–187 (TDSASETSGQSSAEIA) are compositionally biased toward polar residues. RCK C-terminal domains are found at residues 180–264 (GQSS…TLGE) and 265–349 (LQDT…AVGH). The next 6 membrane-spanning stretches (helical) occupy residues 359–378 (LLSLVAGIVLGIFVGNLSLQ), 382–401 (FSMSLGIAGGPLMVGLILGH), 408–430 (IRGSYPPAAMLLMTEGGLALFLA), 445–467 (MERGAMLCVAAAAIAIIPLLVGF), 479–501 (WQSLGATCGGMTSTPGLAVLTGA), and 511–533 (YVAAYPVALVLITVAAPWLVELI).

It belongs to the AAE transporter (TC 2.A.81) family.

It localises to the cell membrane. This is an uncharacterized protein from Rhodopirellula baltica (strain DSM 10527 / NCIMB 13988 / SH1).